A 419-amino-acid polypeptide reads, in one-letter code: Ribosome biogenesis protein WDR12 homolog (419 aa).

The ubiquitin-like (UBL) domain stretch occupies residues 10–91 (VQVHLKTKQE…EDAIDIEYVE (82 aa)). 7 WD repeats span residues 103–140 (LHDD…KLTI), 142–184 (GHTA…NAVE), 191–230 (GHER…TSEG), 249–287 (GHRE…IKTE), 289–328 (STNK…GSVV), 334–374 (GHNA…APLY), and 378–416 (GHGE…IENM).

Belongs to the WD repeat WDR12/YTM1 family.

Its subcellular location is the nucleus. It localises to the nucleolus. The protein localises to the nucleoplasm. Its function is as follows. Required for maturation of ribosomal RNAs and formation of the large ribosomal subunit. In Drosophila virilis (Fruit fly), this protein is Ribosome biogenesis protein WDR12 homolog.